The following is a 657-amino-acid chain: Methionine--tRNA ligase (657 aa).

Positions Tyr13 to His23 match the 'HIGH' region motif. A 'KMSKS' region motif is present at residues Lys308 to Ser312. Lys311 contributes to the ATP binding site. Residues Asp557–Lys657 enclose the tRNA-binding domain.

Belongs to the class-I aminoacyl-tRNA synthetase family. MetG type 2B subfamily. In terms of assembly, homodimer.

Its subcellular location is the cytoplasm. It carries out the reaction tRNA(Met) + L-methionine + ATP = L-methionyl-tRNA(Met) + AMP + diphosphate. In terms of biological role, is required not only for elongation of protein synthesis but also for the initiation of all mRNA translation through initiator tRNA(fMet) aminoacylation. The chain is Methionine--tRNA ligase from Staphylococcus aureus (strain Mu50 / ATCC 700699).